The following is a 349-amino-acid chain: Ribosomal RNA large subunit methyltransferase Cfr (349 aa).

Glu-89 functions as the Proton acceptor in the catalytic mechanism. The region spanning 96 to 331 is the Radical SAM core domain; that stretch reads KAGWESFCIS…VTVRSQFGID (236 aa). Cys-103 and Cys-336 are joined by a disulfide. [4Fe-4S] cluster contacts are provided by Cys-110, Cys-114, and Cys-117. S-adenosyl-L-methionine contacts are provided by residues 156–157, Ser-187, 210–212, and Asn-291; these read GE and SLH. Cys-336 functions as the S-methylcysteine intermediate in the catalytic mechanism.

This sequence belongs to the radical SAM superfamily. RlmN family. Cfr subfamily. [4Fe-4S] cluster serves as cofactor.

Its subcellular location is the cytoplasm. It catalyses the reaction adenosine(2503) in 23S rRNA + 2 reduced [2Fe-2S]-[ferredoxin] + 2 S-adenosyl-L-methionine = 8-methyladenosine(2503) in 23S rRNA + 5'-deoxyadenosine + L-methionine + 2 oxidized [2Fe-2S]-[ferredoxin] + S-adenosyl-L-homocysteine. In terms of biological role, specifically methylates position 8 of adenine 2503 in 23S rRNA. Confers resistance to some classes of antibiotics. The chain is Ribosomal RNA large subunit methyltransferase Cfr from Bacillus velezensis (strain DSM 23117 / BGSC 10A6 / LMG 26770 / FZB42) (Bacillus amyloliquefaciens subsp. plantarum).